The chain runs to 781 residues: Molybdenum cofactor sulfurase (781 aa).

Lys246 carries the post-translational modification N6-(pyridoxal phosphate)lysine. Cys413 is a catalytic residue. The 163-residue stretch at 619–781 (GDAVAQWLSE…MTCGDVVIVE (163 aa)) folds into the MOSC domain. Ser734 bears the Phosphoserine mark.

The protein belongs to the class-V pyridoxal-phosphate-dependent aminotransferase family. MOCOS subfamily. It depends on pyridoxal 5'-phosphate as a cofactor.

The enzyme catalyses Mo-molybdopterin + L-cysteine + AH2 = thio-Mo-molybdopterin + L-alanine + A + H2O. Its pathway is cofactor biosynthesis; molybdopterin biosynthesis. In terms of biological role, sulfurates the molybdenum cofactor. Sulfation of molybdenum is essential for xanthine dehydrogenase (XDH) and aldehyde oxidase (ADO) enzymes in which molybdenum cofactor is liganded by 1 oxygen and 1 sulfur atom in active form. This Drosophila erecta (Fruit fly) protein is Molybdenum cofactor sulfurase.